A 458-amino-acid chain; its full sequence is MSSGRIVQIIGAVIDVEFPRDGVPSVYNALKVEGAETTLEVQQQLGDGVVRTIAMGSTEGLKRGLNVIDSGAAISVPVGKATLGRIMDVLGNPIDEAGPIGEEERWGIHRDAPSFADQAGGNDLLETGIKVIDLVCPFAKGGKVGLFGGAGVGKTVNMMELIRNIAIEHSGYSVFAGVGERTREGNDFYHEMKDSNVLDKVALVYGQMNEPPGNRLRVALTGLTMAEKFRDEGNDVLLFVDNIYRYTLAGTEVSALLGRMPSAVGYQPTLAEEMGVLQERITSTKEGSITSIQAVYVPADDLTDPSPATTFAHLDATVVLSRDIASLGIYPAVDPLDSTSRQLDPNVIGNEHYETARGVQYVLQRYKELKDIIAILGMDELSESDKQLVSRARKIQRFLSQPFFVAEVFTGSPGKYVSLKDTIAGFSGILKGDYDHLPEQAFYMVGSIEEAVEKAKKL.

Residue 148 to 155 (GGAGVGKT) coordinates ATP.

It belongs to the ATPase alpha/beta chains family. In terms of assembly, F-type ATPases have 2 components, CF(1) - the catalytic core - and CF(0) - the membrane proton channel. CF(1) has five subunits: alpha(3), beta(3), gamma(1), delta(1), epsilon(1). CF(0) has three main subunits: a(1), b(2) and c(9-12). The alpha and beta chains form an alternating ring which encloses part of the gamma chain. CF(1) is attached to CF(0) by a central stalk formed by the gamma and epsilon chains, while a peripheral stalk is formed by the delta and b chains.

Its subcellular location is the cell inner membrane. It carries out the reaction ATP + H2O + 4 H(+)(in) = ADP + phosphate + 5 H(+)(out). In terms of biological role, produces ATP from ADP in the presence of a proton gradient across the membrane. The catalytic sites are hosted primarily by the beta subunits. In Pseudomonas putida (strain W619), this protein is ATP synthase subunit beta.